The following is a 510-amino-acid chain: 2,3-bisphosphoglycerate-independent phosphoglycerate mutase (510 aa).

2 residues coordinate Mn(2+): Asp16 and Ser66. The active-site Phosphoserine intermediate is Ser66. Substrate-binding positions include His127, 156-157 (RD), Arg186, Arg192, 257-260 (RADR), and Lys333. 5 residues coordinate Mn(2+): Asp400, His404, Asp441, His442, and His460.

This sequence belongs to the BPG-independent phosphoglycerate mutase family. In terms of assembly, monomer. It depends on Mn(2+) as a cofactor.

The catalysed reaction is (2R)-2-phosphoglycerate = (2R)-3-phosphoglycerate. It participates in carbohydrate degradation; glycolysis; pyruvate from D-glyceraldehyde 3-phosphate: step 3/5. Catalyzes the interconversion of 2-phosphoglycerate and 3-phosphoglycerate. The chain is 2,3-bisphosphoglycerate-independent phosphoglycerate mutase from Gluconobacter oxydans (strain 621H) (Gluconobacter suboxydans).